We begin with the raw amino-acid sequence, 239 residues long: Purine nucleoside phosphorylase DeoD-type (239 aa).

A purine D-ribonucleoside is bound at residue His5. Phosphate is bound by residues Gly21, Arg25, Arg44, and 88-91 (RIGS). A purine D-ribonucleoside-binding positions include 180-182 (EME) and 204-205 (TD). Asp205 functions as the Proton donor in the catalytic mechanism.

This sequence belongs to the PNP/UDP phosphorylase family. As to quaternary structure, homohexamer; trimer of homodimers.

The enzyme catalyses a purine D-ribonucleoside + phosphate = a purine nucleobase + alpha-D-ribose 1-phosphate. The catalysed reaction is a purine 2'-deoxy-D-ribonucleoside + phosphate = a purine nucleobase + 2-deoxy-alpha-D-ribose 1-phosphate. Functionally, catalyzes the reversible phosphorolytic breakdown of the N-glycosidic bond in the beta-(deoxy)ribonucleoside molecules, with the formation of the corresponding free purine bases and pentose-1-phosphate. In Aliivibrio fischeri (strain ATCC 700601 / ES114) (Vibrio fischeri), this protein is Purine nucleoside phosphorylase DeoD-type.